The chain runs to 378 residues: 5-amino-6-(D-ribitylamino)uracil--L-tyrosine 4-hydroxyphenyl transferase (378 aa).

Positions 59 to 306 (VTYVINRNIN…TAVARIYLGN (248 aa)) constitute a Radical SAM core domain. The [4Fe-4S] cluster site is built by cysteine 73, cysteine 77, and cysteine 80.

This sequence belongs to the radical SAM superfamily. CofH family. As to quaternary structure, consists of two subunits, CofG and CofH. [4Fe-4S] cluster is required as a cofactor.

The enzyme catalyses 5-amino-6-(D-ribitylamino)uracil + L-tyrosine + S-adenosyl-L-methionine = 5-amino-5-(4-hydroxybenzyl)-6-(D-ribitylimino)-5,6-dihydrouracil + 2-iminoacetate + 5'-deoxyadenosine + L-methionine + H(+). It functions in the pathway cofactor biosynthesis; coenzyme F0 biosynthesis. Functionally, catalyzes the radical-mediated synthesis of 5-amino-5-(4-hydroxybenzyl)-6-(D-ribitylimino)-5,6-dihydrouracil from 5-amino-6-(D-ribitylamino)uracil and L-tyrosine. The sequence is that of 5-amino-6-(D-ribitylamino)uracil--L-tyrosine 4-hydroxyphenyl transferase from Microcystis aeruginosa (strain NIES-843 / IAM M-2473).